Reading from the N-terminus, the 267-residue chain is MSDILQKILAVKADEVAAARKKRDLPSLRAEAESLRTEPGLAPRGFERALREKIAAGQAGVIAEVKKASPSKGVLREHFVPEAIAESYASHGAACLSVLTDVNFFQGHADYLKRARGACPLPALRKDFMVDLYQVYEARTWGADCILLIVAALDPGLMAELEACALELGMDVLVEVHGDDELDAALRLKTPLLGVNNRNLRTFEVSLDNTLDLLPHMPADKLVVTESGILGQADVKRMRDANVHAFLVGEAFMRAPDPGVELARLFA.

Belongs to the TrpC family.

It catalyses the reaction 1-(2-carboxyphenylamino)-1-deoxy-D-ribulose 5-phosphate + H(+) = (1S,2R)-1-C-(indol-3-yl)glycerol 3-phosphate + CO2 + H2O. It functions in the pathway amino-acid biosynthesis; L-tryptophan biosynthesis; L-tryptophan from chorismate: step 4/5. The polypeptide is Indole-3-glycerol phosphate synthase (Cupriavidus necator (strain ATCC 17699 / DSM 428 / KCTC 22496 / NCIMB 10442 / H16 / Stanier 337) (Ralstonia eutropha)).